The chain runs to 373 residues: Cytoplasmic tRNA 2-thiolation protein 1 (373 aa).

This sequence belongs to the TtcA family. CTU1/NCS6/ATPBD3 subfamily.

The protein resides in the cytoplasm. It functions in the pathway tRNA modification; 5-methoxycarbonylmethyl-2-thiouridine-tRNA biosynthesis. In terms of biological role, plays a central role in 2-thiolation of mcm(5)S(2)U at tRNA wobble positions of tRNA(Lys), tRNA(Glu) and tRNA(Gln). Directly binds tRNAs and probably acts by catalyzing adenylation of tRNAs, an intermediate required for 2-thiolation. It is unclear whether it acts as a sulfurtransferase that transfers sulfur from thiocarboxylated URM1 onto the uridine of tRNAs at wobble position. This Caenorhabditis elegans protein is Cytoplasmic tRNA 2-thiolation protein 1.